A 257-amino-acid chain; its full sequence is Imidazole glycerol phosphate synthase subunit HisF (257 aa).

Active-site residues include D11 and D130.

The protein belongs to the HisA/HisF family. Heterodimer of HisH and HisF.

It is found in the cytoplasm. The catalysed reaction is 5-[(5-phospho-1-deoxy-D-ribulos-1-ylimino)methylamino]-1-(5-phospho-beta-D-ribosyl)imidazole-4-carboxamide + L-glutamine = D-erythro-1-(imidazol-4-yl)glycerol 3-phosphate + 5-amino-1-(5-phospho-beta-D-ribosyl)imidazole-4-carboxamide + L-glutamate + H(+). The protein operates within amino-acid biosynthesis; L-histidine biosynthesis; L-histidine from 5-phospho-alpha-D-ribose 1-diphosphate: step 5/9. Functionally, IGPS catalyzes the conversion of PRFAR and glutamine to IGP, AICAR and glutamate. The HisF subunit catalyzes the cyclization activity that produces IGP and AICAR from PRFAR using the ammonia provided by the HisH subunit. The polypeptide is Imidazole glycerol phosphate synthase subunit HisF (Trichormus variabilis (strain ATCC 29413 / PCC 7937) (Anabaena variabilis)).